The primary structure comprises 521 residues: Probable inorganic phosphate transporter 1-3 (521 aa).

Residues 1 to 24 (MADQQLGVLKALDVAKTQLYHFTA) are Cytoplasmic-facing. A helical transmembrane segment spans residues 25–45 (IVIAGMGFFTDAYDLFCVSLV). At 46 to 70 (TKLLGRLYYFNPTSAKPGSLPPHVA) the chain is on the extracellular side. The helical transmembrane segment at 71–91 (AAVNGVALCGTLAGQLFFGWL) threads the bilayer. The Cytoplasmic segment spans residues 92 to 99 (GDKLGRKK). The helical transmembrane segment at 100 to 120 (VYGITLIMMILCSVASGLSLG) threads the bilayer. Residues 121 to 131 (NSAKGVMTTLC) are Extracellular-facing. Residues 132–152 (FFRFWLGFGIGGDYPLSATIM) form a helical membrane-spanning segment. Over 153-161 (SEYANKKTR) the chain is Cytoplasmic. Residues 162 to 182 (GAFIAAVFAMQGVGILAGGFV) form a helical membrane-spanning segment. Over 183 to 211 (ALAVSSIFDKKFPSPTYEQDRFLSTPPQA) the chain is Extracellular. Residues 212–232 (DYIWRIIVMFGALPAALTYYW) form a helical membrane-spanning segment. Residues 233-292 (RMKMPETARYTALVAKNIKQATADMSKVLQTDLELEERVEDDVKDPKKNYGLFSKEFLRR) are Cytoplasmic-facing. The helical transmembrane segment at 293 to 313 (HGLHLLGTTSTWFLLDIAFYS) threads the bilayer. The Extracellular portion of the chain corresponds to 314–348 (QNLFQKDIFSAIGWIPKAATMNAIHEVFKIARAQT). A helical membrane pass occupies residues 349-369 (LIALCSTVPGYWFTVAFIDII). Topologically, residues 370–371 (GR) are cytoplasmic. The chain crosses the membrane as a helical span at residues 372–392 (FAIQLMGFFMMTVFMFAIAFP). Over 393-402 (YNHWILPDNR) the chain is Extracellular. A helical transmembrane segment spans residues 403 to 423 (IGFVVMYSLTFFFANFGPNAT). The Cytoplasmic portion of the chain corresponds to 424–441 (TFIVPAEIFPARLRSTCH). The chain crosses the membrane as a helical span at residues 442-462 (GISAATGKAGAIVGAFGFLYA). Residues 463-484 (AQPQDKTKTDAGYPPGIGVKNS) are Extracellular-facing. Residues 485–505 (LIMLGVINFVGMLFTFLVPEP) traverse the membrane as a helical segment. Topologically, residues 506-521 (KGKSLEELSGEAEVDK) are cytoplasmic.

Belongs to the major facilitator superfamily. Phosphate:H(+) symporter (TC 2.A.1.9) family. As to expression, mainly expressed in roots, especially in the stele of the primary root, the pericycle and trichoblasts of secondary roots. To a lower extent, present in hydathodes and vascular tissues of young leaves.

The protein resides in the membrane. Functionally, high-affinity transporter for external inorganic phosphate. In Arabidopsis thaliana (Mouse-ear cress), this protein is Probable inorganic phosphate transporter 1-3 (PHT1-3).